Consider the following 232-residue polypeptide: Phosphatidylserine decarboxylase proenzyme (232 aa).

Ser190 functions as the Schiff-base intermediate with substrate; via pyruvic acid in the catalytic mechanism. A Pyruvic acid (Ser); by autocatalysis modification is found at Ser190.

This sequence belongs to the phosphatidylserine decarboxylase family. PSD-A subfamily. Heterodimer of a large membrane-associated beta subunit and a small pyruvoyl-containing alpha subunit. Pyruvate is required as a cofactor. In terms of processing, is synthesized initially as an inactive proenzyme. Formation of the active enzyme involves a self-maturation process in which the active site pyruvoyl group is generated from an internal serine residue via an autocatalytic post-translational modification. Two non-identical subunits are generated from the proenzyme in this reaction, and the pyruvate is formed at the N-terminus of the alpha chain, which is derived from the carboxyl end of the proenzyme. The post-translation cleavage follows an unusual pathway, termed non-hydrolytic serinolysis, in which the side chain hydroxyl group of the serine supplies its oxygen atom to form the C-terminus of the beta chain, while the remainder of the serine residue undergoes an oxidative deamination to produce ammonia and the pyruvoyl prosthetic group on the alpha chain.

The protein resides in the cell membrane. The catalysed reaction is a 1,2-diacyl-sn-glycero-3-phospho-L-serine + H(+) = a 1,2-diacyl-sn-glycero-3-phosphoethanolamine + CO2. It participates in phospholipid metabolism; phosphatidylethanolamine biosynthesis; phosphatidylethanolamine from CDP-diacylglycerol: step 2/2. Catalyzes the formation of phosphatidylethanolamine (PtdEtn) from phosphatidylserine (PtdSer). This is Phosphatidylserine decarboxylase proenzyme from Sinorhizobium medicae (strain WSM419) (Ensifer medicae).